Reading from the N-terminus, the 428-residue chain is Adenylosuccinate synthetase (428 aa).

GTP-binding positions include 12–18 (GDEGKGK) and 40–42 (GHT). Asp13 acts as the Proton acceptor in catalysis. Positions 13 and 40 each coordinate Mg(2+). IMP-binding positions include 13–16 (DEGK), 38–41 (NAGH), Thr127, Arg141, Gln222, Thr237, and Arg301. The Proton donor role is filled by His41. 297-303 (TVTKRPR) contacts substrate. GTP contacts are provided by residues Arg303, 329 to 331 (CLD), and 411 to 413 (SVG).

The protein belongs to the adenylosuccinate synthetase family. As to quaternary structure, homodimer. Requires Mg(2+) as cofactor.

It localises to the cytoplasm. It carries out the reaction IMP + L-aspartate + GTP = N(6)-(1,2-dicarboxyethyl)-AMP + GDP + phosphate + 2 H(+). The protein operates within purine metabolism; AMP biosynthesis via de novo pathway; AMP from IMP: step 1/2. Its function is as follows. Plays an important role in the de novo pathway of purine nucleotide biosynthesis. Catalyzes the first committed step in the biosynthesis of AMP from IMP. The polypeptide is Adenylosuccinate synthetase (Levilactobacillus brevis (strain ATCC 367 / BCRC 12310 / CIP 105137 / JCM 1170 / LMG 11437 / NCIMB 947 / NCTC 947) (Lactobacillus brevis)).